Reading from the N-terminus, the 599-residue chain is Aspartate--tRNA ligase (599 aa).

Glu180 provides a ligand contact to L-aspartate. Positions 204–207 are aspartate; it reads QIFK. Arg226 is a binding site for L-aspartate. Residues 226 to 228 and Gln235 each bind ATP; that span reads RDE. Position 454 (His454) interacts with L-aspartate. Glu488 is an ATP binding site. Residue Arg495 participates in L-aspartate binding. 540–543 contributes to the ATP binding site; it reads GLDR.

It belongs to the class-II aminoacyl-tRNA synthetase family. Type 1 subfamily. Homodimer.

It is found in the cytoplasm. The catalysed reaction is tRNA(Asp) + L-aspartate + ATP = L-aspartyl-tRNA(Asp) + AMP + diphosphate. Catalyzes the attachment of L-aspartate to tRNA(Asp) in a two-step reaction: L-aspartate is first activated by ATP to form Asp-AMP and then transferred to the acceptor end of tRNA(Asp). The sequence is that of Aspartate--tRNA ligase from Clostridium botulinum (strain Eklund 17B / Type B).